The sequence spans 524 residues: Serine/threonine-protein kinase PAK 2 (524 aa).

The interval 1–81 (MSDNGELEDK…PEISPPSDFE (81 aa)) is disordered. Position 2 is an N-acetylserine (Ser-2). A phosphoserine mark is found at Ser-2, Ser-20, Ser-55, and Ser-58. Thr-60 is subject to Phosphothreonine. Lys-62 carries the post-translational modification N6-acetyllysine. Ser-64 bears the Phosphoserine mark. Basic and acidic residues predominate over residues 67-81 (KEKERPEISPPSDFE). Positions 69–112 (KERPEISPPSDFEHTIHVGFDAVTGEFTGMPEQWARLLQTSNIT) are GTPase-binding. Positions 69–137 (KERPEISPPS…KFYDSNTVKQ (69 aa)) are autoregulatory region. In terms of domain architecture, CRIB spans 74 to 87 (ISPPSDFEHTIHVG). The residue at position 128 (Lys-128) is an N6-acetyllysine. Phosphothreonine is present on Thr-134. Residue Tyr-139 is modified to Phosphotyrosine. Residue Ser-141 is modified to Phosphoserine. Position 143 is a phosphothreonine (Thr-143). Disordered stretches follow at residues 143-164 (TPPE…GTEA) and 169-188 (TEEE…PRPD). Residue Ser-152 is modified to Phosphoserine. A phosphothreonine mark is found at Thr-154 and Thr-169. A compositionally biased stretch (acidic residues) spans 169–178 (TEEEDDDEET). Position 197 is a phosphoserine (Ser-197). Residue Gly-213 is the site of N-myristoyl glycine; in form PAK-2p34 attachment. Residues 245 to 251 (PKKKYTR) carry the Nuclear localization signal motif. The Protein kinase domain occupies 249–499 (YTRYEKIGQG…SAKELLQHPF (251 aa)). ATP is bound by residues 255–263 (IGQGASGTV) and Lys-278. Residue Arg-367 is the Proton acceptor of the active site. Residue Thr-402 is modified to Phosphothreonine; by autocatalysis.

It belongs to the protein kinase superfamily. STE Ser/Thr protein kinase family. STE20 subfamily. Interacts tightly with GTP-bound but not GDP-bound CDC42/p21 and RAC1. Interacts with SH3MD4. Interacts with SCRIB. Interacts with ARHGEF7 and GIT1. PAK-2p34 interacts with ARHGAP10. In terms of assembly, (Microbial infection) Interacts with and activated by HIV-1 Nef. Full-length PAK2 is autophosphorylated when activated by CDC42/p21. Following cleavage, both peptides, PAK-2p27 and PAK-2p34, become highly autophosphorylated, with PAK-2p27 being phosphorylated on serine and PAK-2p34 on threonine residues, respectively. Autophosphorylation of PAK-2p27 can occur in the absence of any effectors and is dependent on phosphorylation of Thr-402, because PAK-2p27 is acting as an exogenous substrate. In terms of processing, during apoptosis proteolytically cleaved by caspase-3 or caspase-3-like proteases to yield active PAK-2p34. Post-translationally, ubiquitinated, leading to its proteasomal degradation. PAK-2p34 is myristoylated. Ubiquitously expressed. Higher levels seen in skeletal muscle, ovary, thymus and spleen.

Its subcellular location is the cytoplasm. It is found in the nucleus. It localises to the perinuclear region. The protein resides in the membrane. The catalysed reaction is L-seryl-[protein] + ATP = O-phospho-L-seryl-[protein] + ADP + H(+). The enzyme catalyses L-threonyl-[protein] + ATP = O-phospho-L-threonyl-[protein] + ADP + H(+). Activated by binding small G proteins. Binding of GTP-bound CDC42 or RAC1 to the autoregulatory region releases monomers from the autoinhibited dimer, enables phosphorylation of Thr-402 and allows the kinase domain to adopt an active structure. Following caspase cleavage, autophosphorylated PAK-2p34 is constitutively active. Serine/threonine protein kinase that plays a role in a variety of different signaling pathways including cytoskeleton regulation, cell motility, cell cycle progression, apoptosis or proliferation. Acts as a downstream effector of the small GTPases CDC42 and RAC1. Activation by the binding of active CDC42 and RAC1 results in a conformational change and a subsequent autophosphorylation on several serine and/or threonine residues. Full-length PAK2 stimulates cell survival and cell growth. Phosphorylates MAPK4 and MAPK6 and activates the downstream target MAPKAPK5, a regulator of F-actin polymerization and cell migration. Phosphorylates JUN and plays an important role in EGF-induced cell proliferation. Phosphorylates many other substrates including histone H4 to promote assembly of H3.3 and H4 into nucleosomes, BAD, ribosomal protein S6, or MBP. Phosphorylates CASP7, thereby preventing its activity. Additionally, associates with ARHGEF7 and GIT1 to perform kinase-independent functions such as spindle orientation control during mitosis. On the other hand, apoptotic stimuli such as DNA damage lead to caspase-mediated cleavage of PAK2, generating PAK-2p34, an active p34 fragment that translocates to the nucleus and promotes cellular apoptosis involving the JNK signaling pathway. Caspase-activated PAK2 phosphorylates MKNK1 and reduces cellular translation. This is Serine/threonine-protein kinase PAK 2 (PAK2) from Homo sapiens (Human).